A 212-amino-acid chain; its full sequence is uncharacterized protein (212 aa).

3 residues coordinate S-adenosyl-L-methionine: Gly-53, Glu-74, and Asp-97.

This sequence belongs to the methyltransferase superfamily. YrrT family.

Could be a S-adenosyl-L-methionine-dependent methyltransferase. This is an uncharacterized protein from Bacillus thuringiensis (strain Al Hakam).